A 411-amino-acid polypeptide reads, in one-letter code: LL-diaminopimelate aminotransferase (411 aa).

The substrate site is built by Tyr16 and Gly43. Pyridoxal 5'-phosphate is bound by residues Tyr73, 109–110 (AK), Tyr133, Asn188, Tyr219, and 247–249 (SFS). 3 residues coordinate substrate: Lys110, Tyr133, and Asn188. Lys250 carries the post-translational modification N6-(pyridoxal phosphate)lysine. 2 residues coordinate pyridoxal 5'-phosphate: Arg258 and Asn293. Residues Asn293 and Arg389 each contribute to the substrate site.

This sequence belongs to the class-I pyridoxal-phosphate-dependent aminotransferase family. LL-diaminopimelate aminotransferase subfamily. As to quaternary structure, homodimer. It depends on pyridoxal 5'-phosphate as a cofactor.

It catalyses the reaction (2S,6S)-2,6-diaminopimelate + 2-oxoglutarate = (S)-2,3,4,5-tetrahydrodipicolinate + L-glutamate + H2O + H(+). The protein operates within amino-acid biosynthesis; L-lysine biosynthesis via DAP pathway; LL-2,6-diaminopimelate from (S)-tetrahydrodipicolinate (aminotransferase route): step 1/1. Its function is as follows. Involved in the synthesis of meso-diaminopimelate (m-DAP or DL-DAP), required for both lysine and peptidoglycan biosynthesis. Catalyzes the direct conversion of tetrahydrodipicolinate to LL-diaminopimelate. The chain is LL-diaminopimelate aminotransferase from Methanobrevibacter smithii (strain ATCC 35061 / DSM 861 / OCM 144 / PS).